We begin with the raw amino-acid sequence, 179 residues long: Large ribosomal subunit protein uL5 (179 aa).

This sequence belongs to the universal ribosomal protein uL5 family. Part of the 50S ribosomal subunit; part of the 5S rRNA/L5/L18/L25 subcomplex. Contacts the 5S rRNA and the P site tRNA. Forms a bridge to the 30S subunit in the 70S ribosome.

In terms of biological role, this is one of the proteins that bind and probably mediate the attachment of the 5S RNA into the large ribosomal subunit, where it forms part of the central protuberance. In the 70S ribosome it contacts protein S13 of the 30S subunit (bridge B1b), connecting the 2 subunits; this bridge is implicated in subunit movement. Contacts the P site tRNA; the 5S rRNA and some of its associated proteins might help stabilize positioning of ribosome-bound tRNAs. The protein is Large ribosomal subunit protein uL5 of Paraburkholderia phymatum (strain DSM 17167 / CIP 108236 / LMG 21445 / STM815) (Burkholderia phymatum).